Reading from the N-terminus, the 315-residue chain is 4-diphosphocytidyl-2-C-methyl-D-erythritol kinase (315 aa).

K8 is a catalytic residue. Residue 93-103 (PVAAGLAGGSS) coordinates ATP. The active site involves D135.

The protein belongs to the GHMP kinase family. IspE subfamily.

It carries out the reaction 4-CDP-2-C-methyl-D-erythritol + ATP = 4-CDP-2-C-methyl-D-erythritol 2-phosphate + ADP + H(+). Its pathway is isoprenoid biosynthesis; isopentenyl diphosphate biosynthesis via DXP pathway; isopentenyl diphosphate from 1-deoxy-D-xylulose 5-phosphate: step 3/6. In terms of biological role, catalyzes the phosphorylation of the position 2 hydroxy group of 4-diphosphocytidyl-2C-methyl-D-erythritol. This Heliobacterium modesticaldum (strain ATCC 51547 / Ice1) protein is 4-diphosphocytidyl-2-C-methyl-D-erythritol kinase.